The chain runs to 188 residues: MSKVDHEKIQQAVVMILEAIGEDPAREGLEDTPKRVAKMYEEVFAGLNQDPKEHFATIFGEDHEELVLVKDIPFFSMCEHHLVPFFGKAHVGYIPKGGKVTGLSKLARAVEAVARRPQLQERITSTVADALVETLEPHGVIVVVEAEHMCMTMRGVKKPGAATVTSAVRGTFANDAAARAEVLSLIKG.

Residues Cys-78, His-81, and Cys-150 each coordinate Zn(2+).

Belongs to the GTP cyclohydrolase I family. In terms of assembly, toroid-shaped homodecamer, composed of two pentamers of five dimers.

It catalyses the reaction GTP + H2O = 7,8-dihydroneopterin 3'-triphosphate + formate + H(+). It participates in cofactor biosynthesis; 7,8-dihydroneopterin triphosphate biosynthesis; 7,8-dihydroneopterin triphosphate from GTP: step 1/1. The protein is GTP cyclohydrolase 1 of Halalkalibacterium halodurans (strain ATCC BAA-125 / DSM 18197 / FERM 7344 / JCM 9153 / C-125) (Bacillus halodurans).